The primary structure comprises 116 residues: Iron-sulfur cluster insertion protein ErpA (116 aa).

Residues C44, C108, and C110 each contribute to the iron-sulfur cluster site.

The protein belongs to the HesB/IscA family. As to quaternary structure, homodimer. It depends on iron-sulfur cluster as a cofactor.

Its function is as follows. Required for insertion of 4Fe-4S clusters for at least IspG. This Shewanella loihica (strain ATCC BAA-1088 / PV-4) protein is Iron-sulfur cluster insertion protein ErpA.